A 337-amino-acid polypeptide reads, in one-letter code: Ketol-acid reductoisomerase (NADP(+)) (337 aa).

Residues 3–183 form the KARI N-terminal Rossmann domain; the sequence is VEVFYDDDAD…GGTRAGVIKT (181 aa). NADP(+)-binding positions include 26-29, Ser52, Ser54, and 84-87; these read YGSQ and DTAQ. Residue His109 is part of the active site. NADP(+) is bound at residue Gly135. Residues 184–329 form the KARI C-terminal knotted domain; that stretch reads TFTEETETDL…GRLRAMMSWV (146 aa). Mg(2+) contacts are provided by Asp192, Glu196, Glu228, and Glu232. Ser253 contributes to the substrate binding site.

Belongs to the ketol-acid reductoisomerase family. Mg(2+) serves as cofactor.

The catalysed reaction is (2R)-2,3-dihydroxy-3-methylbutanoate + NADP(+) = (2S)-2-acetolactate + NADPH + H(+). The enzyme catalyses (2R,3R)-2,3-dihydroxy-3-methylpentanoate + NADP(+) = (S)-2-ethyl-2-hydroxy-3-oxobutanoate + NADPH + H(+). The protein operates within amino-acid biosynthesis; L-isoleucine biosynthesis; L-isoleucine from 2-oxobutanoate: step 2/4. Its pathway is amino-acid biosynthesis; L-valine biosynthesis; L-valine from pyruvate: step 2/4. Functionally, involved in the biosynthesis of branched-chain amino acids (BCAA). Catalyzes an alkyl-migration followed by a ketol-acid reduction of (S)-2-acetolactate (S2AL) to yield (R)-2,3-dihydroxy-isovalerate. In the isomerase reaction, S2AL is rearranged via a Mg-dependent methyl migration to produce 3-hydroxy-3-methyl-2-ketobutyrate (HMKB). In the reductase reaction, this 2-ketoacid undergoes a metal-dependent reduction by NADPH to yield (R)-2,3-dihydroxy-isovalerate. In Salinispora tropica (strain ATCC BAA-916 / DSM 44818 / JCM 13857 / NBRC 105044 / CNB-440), this protein is Ketol-acid reductoisomerase (NADP(+)).